Consider the following 274-residue polypeptide: Large ribosomal subunit protein uL2 (274 aa).

A disordered region spans residues 223-265; the sequence is VVMNPVDHPHGGGEGRTSGGRHPVSPWGMPTKGFKTRKNKRTD. The span at 256 to 265 shows a compositional bias: basic residues; it reads FKTRKNKRTD.

Belongs to the universal ribosomal protein uL2 family. As to quaternary structure, part of the 50S ribosomal subunit. Forms a bridge to the 30S subunit in the 70S ribosome.

In terms of biological role, one of the primary rRNA binding proteins. Required for association of the 30S and 50S subunits to form the 70S ribosome, for tRNA binding and peptide bond formation. It has been suggested to have peptidyltransferase activity; this is somewhat controversial. Makes several contacts with the 16S rRNA in the 70S ribosome. The protein is Large ribosomal subunit protein uL2 of Vibrio parahaemolyticus serotype O3:K6 (strain RIMD 2210633).